The following is a 982-amino-acid chain: Glycine dehydrogenase (decarboxylating) (982 aa).

Position 729 is an N6-(pyridoxal phosphate)lysine (K729).

It belongs to the GcvP family. As to quaternary structure, the glycine cleavage system is composed of four proteins: P, T, L and H. Pyridoxal 5'-phosphate is required as a cofactor.

The catalysed reaction is N(6)-[(R)-lipoyl]-L-lysyl-[glycine-cleavage complex H protein] + glycine + H(+) = N(6)-[(R)-S(8)-aminomethyldihydrolipoyl]-L-lysyl-[glycine-cleavage complex H protein] + CO2. The glycine cleavage system catalyzes the degradation of glycine. The P protein binds the alpha-amino group of glycine through its pyridoxal phosphate cofactor; CO(2) is released and the remaining methylamine moiety is then transferred to the lipoamide cofactor of the H protein. The protein is Glycine dehydrogenase (decarboxylating) of Ralstonia nicotianae (strain ATCC BAA-1114 / GMI1000) (Ralstonia solanacearum).